Consider the following 309-residue polypeptide: Ribonuclease Z (309 aa).

Zn(2+)-binding residues include His-63, His-65, Asp-67, His-68, His-141, Asp-212, and His-270. Catalysis depends on Asp-67, which acts as the Proton acceptor.

It belongs to the RNase Z family. Homodimer. Requires Zn(2+) as cofactor.

The enzyme catalyses Endonucleolytic cleavage of RNA, removing extra 3' nucleotides from tRNA precursor, generating 3' termini of tRNAs. A 3'-hydroxy group is left at the tRNA terminus and a 5'-phosphoryl group is left at the trailer molecule.. Its function is as follows. Zinc phosphodiesterase, which displays some tRNA 3'-processing endonuclease activity. Probably involved in tRNA maturation, by removing a 3'-trailer from precursor tRNA. This is Ribonuclease Z from Lactobacillus delbrueckii subsp. bulgaricus (strain ATCC 11842 / DSM 20081 / BCRC 10696 / JCM 1002 / NBRC 13953 / NCIMB 11778 / NCTC 12712 / WDCM 00102 / Lb 14).